The following is a 572-amino-acid chain: Methionine--tRNA ligase (572 aa).

A 'HIGH' region motif is present at residues 11-21 (PYINGIKHLGN). Positions 143, 146, 156, and 159 each coordinate Zn(2+). The 'KMSKS' region signature appears at 346–350 (QFSTS). Position 349 (Thr349) interacts with ATP.

Belongs to the class-I aminoacyl-tRNA synthetase family. MetG type 1 subfamily. Monomer. The cofactor is Zn(2+).

The protein localises to the cytoplasm. It catalyses the reaction tRNA(Met) + L-methionine + ATP = L-methionyl-tRNA(Met) + AMP + diphosphate. Its function is as follows. Is required not only for elongation of protein synthesis but also for the initiation of all mRNA translation through initiator tRNA(fMet) aminoacylation. This Dinoroseobacter shibae (strain DSM 16493 / NCIMB 14021 / DFL 12) protein is Methionine--tRNA ligase.